A 272-amino-acid chain; its full sequence is METHILFFILAGLLIAVLIGYSIWSARREKSRIFSNTFSTRPPSSPISNEITADIPTTLNPQGVVAQQPFNTETPADFIQSQQEVENSVKNIRISLQTQEISQPLYQETMPESPSEAYQQNQIQEQTVQVEQVETIEQTTEHNIITLYVVAPEGVQFQGNAIVQNLEMLGFHFGEYQIFHRHLDNPASPVLFSVANMMQPGVFDLARMEQFSTVGLVFFMHLPSVGNDLANLKLMIRTVESFAQSVGGFVLDEQHQIFNDESRQNYLLRVAN.

Topologically, residues 1–4 are periplasmic; the sequence is METH. Residues 5–25 traverse the membrane as a helical segment; that stretch reads ILFFILAGLLIAVLIGYSIWS. At 26-272 the chain is on the cytoplasmic side; sequence ARREKSRIFS…RQNYLLRVAN (247 aa).

It belongs to the ZipA family. In terms of assembly, interacts with FtsZ via their C-terminal domains.

The protein localises to the cell inner membrane. Essential cell division protein that stabilizes the FtsZ protofilaments by cross-linking them and that serves as a cytoplasmic membrane anchor for the Z ring. Also required for the recruitment to the septal ring of downstream cell division proteins. The protein is Cell division protein ZipA of Glaesserella parasuis serovar 5 (strain SH0165) (Haemophilus parasuis).